The primary structure comprises 1446 residues: ABC-type transporter oblD (1446 aa).

5 N-linked (GlcNAc...) asparagine glycosylation sites follow: N9, N28, N222, N281, and N305. Positions 104 to 357 constitute an ABC transporter 1 domain; that stretch reads LEVLSLVSKA…FLDMGFVCPD (254 aa). Helical transmembrane passes span 468–488, 502–522, 548–568, 577–597, 610–630, and 719–739; these read VTIS…SIFY, ALLF…MLTL, MIMD…VLYF, GAFF…SMFF, ALPF…FTIP, and IGVI…ATDF. Residues 796–1038 form the ABC transporter 2 domain; it reads FQWKDVCFDI…ILIDYFVRNG (243 aa). Position 832 to 839 (832 to 839) interacts with ATP; it reads GVSGAGKT. 5 consecutive transmembrane segments (helical) span residues 1147–1167, 1177–1197, 1217–1237, 1265–1285, and 1301–1321; these read ALCV…PNTI, IFML…HFVA, FIIS…VLMF, LMVW…IAAF, and LCLI…FWIF. N1344 and N1359 each carry an N-linked (GlcNAc...) asparagine glycan. A helical transmembrane segment spans residues 1412–1432; sequence FGLMWVFIVFNIFAACLLYWW.

It belongs to the ABC transporter superfamily. ABCG family. PDR (TC 3.A.1.205) subfamily.

It localises to the cell membrane. Functionally, ABC-type transporter; part of the gene cluster that mediates the biosynthesis of the sesterterpenes ophiobolins, fungal phytotoxins with potential anti-cancer activities. Acts as a specific transporter involved in ophiobolins secretion. This is ABC-type transporter oblD from Aspergillus clavatus (strain ATCC 1007 / CBS 513.65 / DSM 816 / NCTC 3887 / NRRL 1 / QM 1276 / 107).